We begin with the raw amino-acid sequence, 202 residues long: Small ribosomal subunit protein uS5 (202 aa).

Positions 1–13 are enriched in gly residues; the sequence is MPGQQRRGGGSGG. The segment at 1–31 is disordered; that stretch reads MPGQQRRGGGSGGSDRRERRDRSGGGPAQEK. Over residues 14–23 the composition is skewed to basic and acidic residues; sequence SDRRERRDRS. The S5 DRBM domain occupies 34-97; it reads YVERVVAINR…EEAKKHFFKV (64 aa).

The protein belongs to the universal ribosomal protein uS5 family. Part of the 30S ribosomal subunit. Contacts proteins S4 and S8.

Functionally, with S4 and S12 plays an important role in translational accuracy. Located at the back of the 30S subunit body where it stabilizes the conformation of the head with respect to the body. The chain is Small ribosomal subunit protein uS5 from Parafrankia sp. (strain EAN1pec).